A 236-amino-acid polypeptide reads, in one-letter code: Small ribosomal subunit protein eS6 (236 aa).

Phosphoserine is present on residues serine 232 and serine 233.

The protein belongs to the eukaryotic ribosomal protein eS6 family. In terms of processing, phosphorylated.

This chain is Small ribosomal subunit protein eS6 (RPS6), found in Debaryomyces hansenii (strain ATCC 36239 / CBS 767 / BCRC 21394 / JCM 1990 / NBRC 0083 / IGC 2968) (Yeast).